The sequence spans 405 residues: Argininosuccinate synthase (405 aa).

Residue 9 to 17 (AYSGGLDTS) participates in ATP binding. L-citrulline contacts are provided by Y87 and S92. G117 serves as a coordination point for ATP. L-aspartate-binding residues include T119, N123, and D124. L-citrulline is bound at residue N123. R127, S176, S185, E262, and Y274 together coordinate L-citrulline.

It belongs to the argininosuccinate synthase family. Type 1 subfamily. As to quaternary structure, homotetramer.

The protein resides in the cytoplasm. The enzyme catalyses L-citrulline + L-aspartate + ATP = 2-(N(omega)-L-arginino)succinate + AMP + diphosphate + H(+). Its pathway is amino-acid biosynthesis; L-arginine biosynthesis; L-arginine from L-ornithine and carbamoyl phosphate: step 2/3. The chain is Argininosuccinate synthase from Caldicellulosiruptor saccharolyticus (strain ATCC 43494 / DSM 8903 / Tp8T 6331).